The primary structure comprises 271 residues: MPELPEVETTLRGLSPHLVGQRIHGVILRRPDLRWPIPEQIERLLPGATITNVRRRAKYLLIDTDAGGSVLLHLGMSGSLRVLPGDTLPRAHDHVDISLQSGRLLRFNDPRRFGCLLWQSGTQAHDLLAALGPEPLSDAFTGDYLHALAQGRRAAVKTFLMDQAVVVGVGNIYAAESLHRAGISPLREAGKVSLERYRRLADAVKDILAYAIQRGGTTLRDFISPDGAPGYFEQELFVYGREGEACKQCGRVLKHATIGQRATVWCGSCQR.

The active-site Schiff-base intermediate with DNA is Pro-2. Glu-3 functions as the Proton donor in the catalytic mechanism. The active-site Proton donor; for beta-elimination activity is Lys-58. Residues His-92, Arg-111, and Arg-152 each contribute to the DNA site. The FPG-type zinc-finger motif lies at 237–271 (FVYGREGEACKQCGRVLKHATIGQRATVWCGSCQR). Arg-261 (proton donor; for delta-elimination activity) is an active-site residue.

The protein belongs to the FPG family. As to quaternary structure, monomer. Zn(2+) is required as a cofactor.

It catalyses the reaction Hydrolysis of DNA containing ring-opened 7-methylguanine residues, releasing 2,6-diamino-4-hydroxy-5-(N-methyl)formamidopyrimidine.. The enzyme catalyses 2'-deoxyribonucleotide-(2'-deoxyribose 5'-phosphate)-2'-deoxyribonucleotide-DNA = a 3'-end 2'-deoxyribonucleotide-(2,3-dehydro-2,3-deoxyribose 5'-phosphate)-DNA + a 5'-end 5'-phospho-2'-deoxyribonucleoside-DNA + H(+). Functionally, involved in base excision repair of DNA damaged by oxidation or by mutagenic agents. Acts as a DNA glycosylase that recognizes and removes damaged bases. Has a preference for oxidized purines, such as 7,8-dihydro-8-oxoguanine (8-oxoG). Has AP (apurinic/apyrimidinic) lyase activity and introduces nicks in the DNA strand. Cleaves the DNA backbone by beta-delta elimination to generate a single-strand break at the site of the removed base with both 3'- and 5'-phosphates. The polypeptide is Formamidopyrimidine-DNA glycosylase (Xanthomonas axonopodis pv. citri (strain 306)).